The chain runs to 222 residues: TPR repeat-containing protein BH2049 (222 aa).

TPR repeat units lie at residues Ala34–His67 and Pro169–Lys202.

The chain is TPR repeat-containing protein BH2049 from Halalkalibacterium halodurans (strain ATCC BAA-125 / DSM 18197 / FERM 7344 / JCM 9153 / C-125) (Bacillus halodurans).